The chain runs to 1226 residues: Methionine synthase (1226 aa).

The Hcy-binding domain maps to 6 to 326 (RQQLEQQLKQ…EHIAAIAKAV (321 aa)). Zn(2+) contacts are provided by C248, C311, and C312. The region spanning 357–618 (FVNVGERTNV…VPLKLREAVE (262 aa)) is the Pterin-binding domain. In terms of domain architecture, B12-binding N-terminal spans 651-745 (SALEWRAWPV…FINAQKSGST (95 aa)). Methylcob(III)alamin is bound by residues E695, 757–761 (GDVHD), H760, S805, T809, and A861. The B12-binding domain maps to 747–882 (NGKILLATVK…SDEQRPGFIE (136 aa)). Residues 898–1226 (KTPKSRPVTL…EKWLAPNLDA (329 aa)) form the AdoMet activation domain. S-adenosyl-L-methionine-binding positions include D948, R1136, and 1191–1192 (YF).

Belongs to the vitamin-B12 dependent methionine synthase family. It depends on methylcob(III)alamin as a cofactor. Zn(2+) is required as a cofactor.

It catalyses the reaction (6S)-5-methyl-5,6,7,8-tetrahydrofolate + L-homocysteine = (6S)-5,6,7,8-tetrahydrofolate + L-methionine. It participates in amino-acid biosynthesis; L-methionine biosynthesis via de novo pathway; L-methionine from L-homocysteine (MetH route): step 1/1. Its function is as follows. Catalyzes the transfer of a methyl group from methyl-cobalamin to homocysteine, yielding enzyme-bound cob(I)alamin and methionine. Subsequently, remethylates the cofactor using methyltetrahydrofolate. The protein is Methionine synthase (metH) of Vibrio cholerae serotype O1 (strain ATCC 39315 / El Tor Inaba N16961).